Consider the following 560-residue polypeptide: Proline--tRNA ligase (560 aa).

The protein belongs to the class-II aminoacyl-tRNA synthetase family. ProS type 1 subfamily. In terms of assembly, homodimer.

The protein resides in the cytoplasm. It carries out the reaction tRNA(Pro) + L-proline + ATP = L-prolyl-tRNA(Pro) + AMP + diphosphate. Catalyzes the attachment of proline to tRNA(Pro) in a two-step reaction: proline is first activated by ATP to form Pro-AMP and then transferred to the acceptor end of tRNA(Pro). As ProRS can inadvertently accommodate and process non-cognate amino acids such as alanine and cysteine, to avoid such errors it has two additional distinct editing activities against alanine. One activity is designated as 'pretransfer' editing and involves the tRNA(Pro)-independent hydrolysis of activated Ala-AMP. The other activity is designated 'posttransfer' editing and involves deacylation of mischarged Ala-tRNA(Pro). The misacylated Cys-tRNA(Pro) is not edited by ProRS. This chain is Proline--tRNA ligase, found in Vesicomyosocius okutanii subsp. Calyptogena okutanii (strain HA).